The following is a 556-amino-acid chain: Tripartite motif-containing protein 16 (556 aa).

A disordered region spans residues 1-60; that stretch reads MAELDLIAPGPLTGVTAHPLAPLGPDPVSAIPVEKEDADPLSKSGEETQEQGHDPAELGA. Residues 33 to 56 are compositionally biased toward basic and acidic residues; the sequence is VEKEDADPLSKSGEETQEQGHDPA. 2 B box-type zinc fingers span residues 64–113 and 117–156; these read EDQI…LTEP and QDLR…STVS. Ser-107 bears the Phosphoserine mark. Coiled coils occupy residues 163-266 and 312-332; these read NKEV…RLAA and NLIQ…REEE. Ser-195 bears the Phosphoserine mark. The B30.2/SPRY domain occupies 347–545; sequence YRTSKPEPRT…RIVDLGEEPE (199 aa).

This sequence belongs to the TRIM/RBCC family. In terms of assembly, homodimerizes via its coiled-coil domain. Heterodimerizes with MID1, TRIM24 and PML. Interacts with Galectin-3/LGALS3 in a ULK1-dependent manner; this interaction mediates autophagy of damage endomembranes. Interacts with BECN1. Interacts with ATG16L1. Interacts with p62/SQSTM and LC3B/MAP1LC3B. In terms of processing, phosphorylated by ULK1. Post-translationally, auto-ubiquitinates via its B-Boxes. In terms of tissue distribution, widely expressed. Expressed in basal keratinocytes.

The protein localises to the cytoplasm. The enzyme catalyses S-ubiquitinyl-[E2 ubiquitin-conjugating enzyme]-L-cysteine + [acceptor protein]-L-lysine = [E2 ubiquitin-conjugating enzyme]-L-cysteine + N(6)-ubiquitinyl-[acceptor protein]-L-lysine.. E3 ubiquitin ligase that plays an essential role in the organization of autophagic response and ubiquitination upon lysosomal and phagosomal damages. Plays a role in the stress-induced biogenesis and degradation of protein aggresomes by regulating the p62-KEAP1-NRF2 signaling and particularly by modulating the ubiquitination levels and thus stability of NRF2. Acts as a scaffold protein and facilitates autophagic degradation of protein aggregates by interacting with p62/SQSTM, ATG16L1 and LC3B/MAP1LC3B. In turn, protects the cell against oxidative stress-induced cell death as a consequence of endomembrane damage. The sequence is that of Tripartite motif-containing protein 16 (Trim16) from Mus musculus (Mouse).